Reading from the N-terminus, the 207-residue chain is Thiamine-phosphate synthase (207 aa).

Residues 38-42 and N70 each bind 4-amino-2-methyl-5-(diphosphooxymethyl)pyrimidine; that span reads QYRAK. The Mg(2+) site is built by D71 and D90. Position 109 (T109) interacts with 4-amino-2-methyl-5-(diphosphooxymethyl)pyrimidine. 135 to 137 is a binding site for 2-[(2R,5Z)-2-carboxy-4-methylthiazol-5(2H)-ylidene]ethyl phosphate; sequence TNS. K138 is a binding site for 4-amino-2-methyl-5-(diphosphooxymethyl)pyrimidine. Residues G165 and 185–186 contribute to the 2-[(2R,5Z)-2-carboxy-4-methylthiazol-5(2H)-ylidene]ethyl phosphate site; that span reads IS.

This sequence belongs to the thiamine-phosphate synthase family. The cofactor is Mg(2+).

It catalyses the reaction 2-[(2R,5Z)-2-carboxy-4-methylthiazol-5(2H)-ylidene]ethyl phosphate + 4-amino-2-methyl-5-(diphosphooxymethyl)pyrimidine + 2 H(+) = thiamine phosphate + CO2 + diphosphate. The enzyme catalyses 2-(2-carboxy-4-methylthiazol-5-yl)ethyl phosphate + 4-amino-2-methyl-5-(diphosphooxymethyl)pyrimidine + 2 H(+) = thiamine phosphate + CO2 + diphosphate. It carries out the reaction 4-methyl-5-(2-phosphooxyethyl)-thiazole + 4-amino-2-methyl-5-(diphosphooxymethyl)pyrimidine + H(+) = thiamine phosphate + diphosphate. Its pathway is cofactor biosynthesis; thiamine diphosphate biosynthesis; thiamine phosphate from 4-amino-2-methyl-5-diphosphomethylpyrimidine and 4-methyl-5-(2-phosphoethyl)-thiazole: step 1/1. Condenses 4-methyl-5-(beta-hydroxyethyl)thiazole monophosphate (THZ-P) and 2-methyl-4-amino-5-hydroxymethyl pyrimidine pyrophosphate (HMP-PP) to form thiamine monophosphate (TMP). This Clostridium perfringens (strain SM101 / Type A) protein is Thiamine-phosphate synthase.